The chain runs to 1291 residues: Vigilin 1 (1291 aa).

The span at 1–39 shows a compositional bias: polar residues; the sequence is MEHLSNLEQPTTMDSYDFQKLTNDENLQGTESQVPSGSK. Disordered stretches follow at residues 1–45 and 70–91; these read MEHL…STNG and HENAQQGKKQNNSKSFSKKPAI. Over residues 73–88 the composition is skewed to low complexity; sequence AQQGKKQNNSKSFSKK. S115 carries the post-translational modification Phosphoserine. Positions 124-148 are disordered; that stretch reads TSVAGSDSVSRDKIPFSASSRASST. KH domains are found at residues 166-229, 236-328, 339-405, 416-486, 575-644, 658-726, 741-798, 808-883, 894-957, 967-1040, 1050-1114, and 1219-1280; these read ILSP…RRQI, RETK…QKDI, TTVR…ALYL, TIPT…NSTI, SKFY…LADL, IVSE…VSEI, SHVE…AARI, DTIL…KQEL, AYTS…IKEI, LVEK…ETRL, QVEE…KEMI, and NCIA…KDLI. The tract at residues 266–303 is disordered; the sequence is TSTRIQIPKRNNTANESSDDAKKPEKEENSAASTLDDL. Positions 268 to 281 are enriched in polar residues; that stretch reads TRIQIPKRNNTANE. Basic and acidic residues predominate over residues 284-294; it reads DDAKKPEKEEN. Residues 845 to 865 form a disordered region; that stretch reads PREDDSSNSTGNELMKPTSPD. The residue at position 934 (S934) is a Phosphoserine. The residue at position 935 (T935) is a Phosphothreonine.

Its subcellular location is the endoplasmic reticulum. It is found in the cytoplasm. Functionally, required for cell survival under thermal stress. In Schizosaccharomyces pombe (strain 972 / ATCC 24843) (Fission yeast), this protein is Vigilin 1 (vgl1).